The primary structure comprises 290 residues: Protease HtpX homolog (290 aa).

2 consecutive transmembrane segments (helical) span residues 4–24 (ILLF…VASL) and 39–59 (TALL…SLLI). Residue His-144 coordinates Zn(2+). The active site involves Glu-145. Position 148 (His-148) interacts with Zn(2+). Helical transmembrane passes span 159–179 (LIQG…GYAV) and 199–219 (VSTI…VAWF). Position 224 (Glu-224) interacts with Zn(2+).

The protein belongs to the peptidase M48B family. Zn(2+) serves as cofactor.

Its subcellular location is the cell inner membrane. This chain is Protease HtpX homolog, found in Variovorax paradoxus (strain S110).